Here is a 214-residue protein sequence, read N- to C-terminus: Peroxiredoxin 2 (214 aa).

One can recognise a Thioredoxin domain in the interval 1-157; it reads MKLYQKFPET…LLRITKAMIV (157 aa). Cysteine 45 acts as the Cysteine sulfenic acid (-SOH) intermediate in catalysis. Arginine 120 contacts substrate.

This sequence belongs to the peroxiredoxin family. Prx6 subfamily. Homodecamer. Pentamer of dimers that assemble into a ring structure.

It is found in the cytoplasm. The catalysed reaction is a hydroperoxide + [thioredoxin]-dithiol = an alcohol + [thioredoxin]-disulfide + H2O. Functionally, thiol-specific peroxidase that catalyzes the reduction of hydrogen peroxide and organic hydroperoxides to water and alcohols, respectively. Plays a role in cell protection against oxidative stress by detoxifying peroxides. This Sulfuracidifex metallicus (Sulfolobus metallicus) protein is Peroxiredoxin 2.